The following is a 182-amino-acid chain: Transcription repressor OFP11 (182 aa).

The segment at proline 62 to serine 94 is disordered. Positions methionine 104–tryptophan 169 constitute an OVATE domain.

As to expression, expressed in roots, rosette and cauline leaves, shoots, stems, flower buds and siliques.

It localises to the nucleus. Transcriptional repressor that may regulate multiple aspects of plant growth and development through the regulation of BEL1-LIKE (BLH) and KNOX TALE (KNAT) homeodomain transcription factors. This is Transcription repressor OFP11 (OFP11) from Arabidopsis thaliana (Mouse-ear cress).